Here is a 307-residue protein sequence, read N- to C-terminus: Transcriptional repressor scratch 2 (307 aa).

Residues 1 to 20 (MPRSFLVKKIKGDGFQCSGV) are SNAG domain. Disordered stretches follow at residues 34–90 (LPGA…PQSS) and 116–148 (GRSR…AGAQ). Residues 124 to 148 (GGGGDAGGSGDAGGAGGRAGRAGAQ) show a composition bias toward gly residues. C2H2-type zinc fingers lie at residues 155–177 (HACA…KQTH), 186–208 (RKCP…LLTH), 212–234 (HKCG…MRSH), and 240–262 (FGCA…MQTH). The segment at 268 to 291 (YRCRQCDKSFALKSYLHKHCEAAC) adopts a C2H2-type 5; atypical zinc-finger fold.

It belongs to the snail C2H2-type zinc-finger protein family.

It localises to the nucleus. In terms of biological role, may be involved in transcriptional regulation. In Homo sapiens (Human), this protein is Transcriptional repressor scratch 2 (SCRT2).